Here is a 590-residue protein sequence, read N- to C-terminus: Glutamine--tRNA ligase (590 aa).

Residues 55 to 65 carry the 'HIGH' region motif; the sequence is PEPNGYLHIGH. Residues 56–58 and 62–68 contribute to the ATP site; these read EPN and HIGHAKS. Residues aspartate 93 and tyrosine 238 each coordinate L-glutamine. Residues threonine 257 and 292–293 contribute to the ATP site; that span reads RL. The 'KMSKS' region signature appears at 299 to 303; that stretch reads ITSKR.

Belongs to the class-I aminoacyl-tRNA synthetase family. In terms of assembly, monomer.

Its subcellular location is the cytoplasm. The catalysed reaction is tRNA(Gln) + L-glutamine + ATP = L-glutaminyl-tRNA(Gln) + AMP + diphosphate. This chain is Glutamine--tRNA ligase, found in Polynucleobacter necessarius subsp. necessarius (strain STIR1).